Consider the following 87-residue polypeptide: Phosphoribosyl-ATP pyrophosphatase (87 aa).

Belongs to the PRA-PH family.

The protein resides in the cytoplasm. The enzyme catalyses 1-(5-phospho-beta-D-ribosyl)-ATP + H2O = 1-(5-phospho-beta-D-ribosyl)-5'-AMP + diphosphate + H(+). It functions in the pathway amino-acid biosynthesis; L-histidine biosynthesis; L-histidine from 5-phospho-alpha-D-ribose 1-diphosphate: step 2/9. This Leifsonia xyli subsp. xyli (strain CTCB07) protein is Phosphoribosyl-ATP pyrophosphatase.